A 253-amino-acid polypeptide reads, in one-letter code: 5-oxoprolinase subunit A (253 aa).

This sequence belongs to the LamB/PxpA family. In terms of assembly, forms a complex composed of PxpA, PxpB and PxpC.

The catalysed reaction is 5-oxo-L-proline + ATP + 2 H2O = L-glutamate + ADP + phosphate + H(+). Catalyzes the cleavage of 5-oxoproline to form L-glutamate coupled to the hydrolysis of ATP to ADP and inorganic phosphate. The sequence is that of 5-oxoprolinase subunit A from Bacillus cereus (strain Q1).